The primary structure comprises 362 residues: Alcohol dehydrogenase 13 (362 aa).

Positions 51, 73, 104, 107, 110, 118, and 168 each coordinate Zn(2+). Histidine 73 contacts substrate. NAD(+)-binding positions include 193–198 (GLGGLG) and 280–282 (VGA).

This sequence belongs to the zinc-containing alcohol dehydrogenase family. Class-III subfamily. As to quaternary structure, homodimer. It depends on Zn(2+) as a cofactor.

This Catharanthus roseus (Madagascar periwinkle) protein is Alcohol dehydrogenase 13.